Here is a 379-residue protein sequence, read N- to C-terminus: Chaperone protein DnaJ (379 aa).

In terms of domain architecture, J spans 5–70; the sequence is DYYELLEVSR…QKRAAYDQFG (66 aa). The segment at 135-213 adopts a CR-type zinc-finger fold; it reads GKEVEITVPR…CHGQGRVRES (79 aa). 8 residues coordinate Zn(2+): Cys-148, Cys-151, Cys-165, Cys-168, Cys-187, Cys-190, Cys-201, and Cys-204. CXXCXGXG motif repeat units lie at residues 148-155, 165-172, 187-194, and 201-208; these read CTVCEGSG, CETCQGMG, CPTCHGEG, and CASCHGQG.

Belongs to the DnaJ family. Homodimer. The cofactor is Zn(2+).

The protein resides in the cytoplasm. Its function is as follows. Participates actively in the response to hyperosmotic and heat shock by preventing the aggregation of stress-denatured proteins and by disaggregating proteins, also in an autonomous, DnaK-independent fashion. Unfolded proteins bind initially to DnaJ; upon interaction with the DnaJ-bound protein, DnaK hydrolyzes its bound ATP, resulting in the formation of a stable complex. GrpE releases ADP from DnaK; ATP binding to DnaK triggers the release of the substrate protein, thus completing the reaction cycle. Several rounds of ATP-dependent interactions between DnaJ, DnaK and GrpE are required for fully efficient folding. Also involved, together with DnaK and GrpE, in the DNA replication of plasmids through activation of initiation proteins. This Legionella pneumophila (strain Corby) protein is Chaperone protein DnaJ.